We begin with the raw amino-acid sequence, 1051 residues long: Exportin-T (1051 aa).

This sequence belongs to the exportin family.

Its subcellular location is the nucleus. The protein resides in the cytoplasm. TRNA nucleus export receptor which facilitates tRNA translocation across the nuclear pore complex. Involved in pre-tRNA splicing, probably by affecting the interaction of pre-tRNA with splicing endonuclease. This chain is Exportin-T (LOS1), found in Eremothecium gossypii (strain ATCC 10895 / CBS 109.51 / FGSC 9923 / NRRL Y-1056) (Yeast).